A 567-amino-acid polypeptide reads, in one-letter code: Septation ring formation regulator EzrA (567 aa).

Residues 1-2 (ME) are Extracellular-facing. A helical transmembrane segment spans residues 3–21 (FIIGLIVILLALFSVGYFL). Topologically, residues 22–567 (RKNIYKEIDR…AQQEKEYQHQ (546 aa)) are cytoplasmic. Coiled-coil stretches lie at residues 108–185 (IEDL…YEEE), 243–375 (KGYK…RDHV), and 402–529 (KGHL…ERRF).

It belongs to the EzrA family.

Its subcellular location is the cell membrane. Negative regulator of FtsZ ring formation; modulates the frequency and position of FtsZ ring formation. Inhibits FtsZ ring formation at polar sites. Interacts either with FtsZ or with one of its binding partners to promote depolymerization. The protein is Septation ring formation regulator EzrA of Bacillus pumilus (strain SAFR-032).